Reading from the N-terminus, the 604-residue chain is MSNTNINVQSSTPKKSLGSSQYSLAGSSSSNLNNINNNNNNNNNNNNNSTGQENSIDDSGSSSFVNFPASEWLSKAMHKHPDILELRERTRPITQVKSYSRNKRSSKTEASHSINDTMLLKLIMQYFHEENLTTSLKKIQEETKVQFTPNEVDKDSLENLLRIGIKDTNWFGPLEDIEDADPEVETYHSYISEDSLNENGLEGEGNLIEDRYDESQISRNPDGTIKAATFNRLLLWLIGNFNGPDVNEFKKIFFLTYPSFTTAEAILNKFTQIYQLFDNIESAQVICFIRFWIEQHPTDFNEKLLAILNNFIEHQVAASHAKQLRAVINLKIENYKEARKEIKDPPEPKVPKNIFSPTLTFDDIDEEEIARQLCCIDFALYELIKPSEFLIKGWTKPQYRNKAVNLLNMMRRFNDFTKWIAASILNEQNSKGRSKLLGRFLKISEHLRANNNFHSLMAIYGGINNTHVFRTKAIRKDLSRQQQETYAELEKLFASENSFRNYRIAYKDAKPPCIPFLGIHLRDLAFVDESNPDRINNLLNLNKRRVIWRVIVNTMRYQPIPYYFLKVHQISLFLTELKTESEQPQLTLDLSSHDTVLPSSPSSK.

Positions 1-26 are enriched in polar residues; the sequence is MSNTNINVQSSTPKKSLGSSQYSLAG. The disordered stretch occupies residues 1-61; the sequence is MSNTNINVQS…QENSIDDSGS (61 aa). Residues 27 to 49 are compositionally biased toward low complexity; sequence SSSSNLNNINNNNNNNNNNNNNS. Residues 50 to 61 show a composition bias toward polar residues; it reads TGQENSIDDSGS. The region spanning 115 to 147 is the LisH domain; that stretch reads NDTMLLKLIMQYFHEENLTTSLKKIQEETKVQF. Residues 221–335 form the N-terminal Ras-GEF domain; the sequence is PDGTIKAATF…AVINLKIENY (115 aa). The 227-residue stretch at 365–591 folds into the Ras-GEF domain; sequence DEEEIARQLC…EQPQLTLDLS (227 aa).

In terms of assembly, component of the Sca1 complex composed of at least gefA, gefH, scaA, phr, and the protein phosphatase 2A subunits pppA and pho2B. Interacts directly with gefA and phr.

It is found in the cell membrane. Functionally, promotes the exchange of Ras-bound GDP by GTP. Component of the Sca1 complex, a regulator of cell motility, chemotaxis and signal relay. The Sca1 complex is recruited to the plasma membrane in a chemoattractant- and F-actin-dependent manner and is enriched at the leading edge of chemotaxing cells where it regulates F-actin dynamics and signal relay by controlling the activation of rasC and the downstream target of rapamycin complex 2 (TORC2)-Akt/protein kinase B (PKB) pathway. This chain is Ras guanine nucleotide exchange factor H (gefH), found in Dictyostelium discoideum (Social amoeba).